Consider the following 179-residue polypeptide: Large ribosomal subunit protein bL17 (179 aa).

Residues 123-161 (KEKDTKKKDDSKKSDDKKTSKKEAGFKSSKGESEHKKNT) show a composition bias toward basic and acidic residues. The tract at residues 123–179 (KEKDTKKKDDSKKSDDKKTSKKEAGFKSSKGESEHKKNTDQVVDSSSNRRYNRVKGS) is disordered. Polar residues predominate over residues 162-171 (DQVVDSSSNR).

It belongs to the bacterial ribosomal protein bL17 family. In terms of assembly, part of the 50S ribosomal subunit. Contacts protein L32.

The polypeptide is Large ribosomal subunit protein bL17 (Treponema denticola (strain ATCC 35405 / DSM 14222 / CIP 103919 / JCM 8153 / KCTC 15104)).